The primary structure comprises 387 residues: 8-amino-7-oxononanoate synthase (387 aa).

A substrate-binding site is contributed by R19. 106-107 (GY) serves as a coordination point for pyridoxal 5'-phosphate. H131 contacts substrate. Pyridoxal 5'-phosphate is bound by residues S177, H205, and T236. Position 239 is an N6-(pyridoxal phosphate)lysine (K239). T353 is a substrate binding site.

The protein belongs to the class-II pyridoxal-phosphate-dependent aminotransferase family. BioF subfamily. Homodimer. It depends on pyridoxal 5'-phosphate as a cofactor.

The catalysed reaction is 6-carboxyhexanoyl-[ACP] + L-alanine + H(+) = (8S)-8-amino-7-oxononanoate + holo-[ACP] + CO2. Its pathway is cofactor biosynthesis; biotin biosynthesis. Functionally, catalyzes the decarboxylative condensation of pimeloyl-[acyl-carrier protein] and L-alanine to produce 8-amino-7-oxononanoate (AON), [acyl-carrier protein], and carbon dioxide. The chain is 8-amino-7-oxononanoate synthase from Nitrosomonas europaea (strain ATCC 19718 / CIP 103999 / KCTC 2705 / NBRC 14298).